The primary structure comprises 361 residues: Phosphoserine aminotransferase (361 aa).

Arg43 serves as a coordination point for L-glutamate. Pyridoxal 5'-phosphate is bound by residues 77–78 (AS), Trp103, Thr153, Asp173, and Gln196. An N6-(pyridoxal phosphate)lysine modification is found at Lys197. 238–239 (NT) contributes to the pyridoxal 5'-phosphate binding site.

Belongs to the class-V pyridoxal-phosphate-dependent aminotransferase family. SerC subfamily. Homodimer. Requires pyridoxal 5'-phosphate as cofactor.

It is found in the cytoplasm. It carries out the reaction O-phospho-L-serine + 2-oxoglutarate = 3-phosphooxypyruvate + L-glutamate. It catalyses the reaction 4-(phosphooxy)-L-threonine + 2-oxoglutarate = (R)-3-hydroxy-2-oxo-4-phosphooxybutanoate + L-glutamate. It functions in the pathway amino-acid biosynthesis; L-serine biosynthesis; L-serine from 3-phospho-D-glycerate: step 2/3. Its pathway is cofactor biosynthesis; pyridoxine 5'-phosphate biosynthesis; pyridoxine 5'-phosphate from D-erythrose 4-phosphate: step 3/5. In terms of biological role, catalyzes the reversible conversion of 3-phosphohydroxypyruvate to phosphoserine and of 3-hydroxy-2-oxo-4-phosphonooxybutanoate to phosphohydroxythreonine. This chain is Phosphoserine aminotransferase, found in Pseudomonas fluorescens (strain SBW25).